The primary structure comprises 102 residues: NADH-quinone oxidoreductase subunit K 1 (102 aa).

The next 3 helical transmembrane spans lie at 5-25 (LYEV…CVVA), 30-50 (VIMM…TFVG), and 62-82 (VFSL…LAMV).

This sequence belongs to the complex I subunit 4L family. NDH-1 is composed of 14 different subunits. Subunits NuoA, H, J, K, L, M, N constitute the membrane sector of the complex.

The protein localises to the cell inner membrane. It catalyses the reaction a quinone + NADH + 5 H(+)(in) = a quinol + NAD(+) + 4 H(+)(out). In terms of biological role, NDH-1 shuttles electrons from NADH, via FMN and iron-sulfur (Fe-S) centers, to quinones in the respiratory chain. The immediate electron acceptor for the enzyme in this species is believed to be ubiquinone. Couples the redox reaction to proton translocation (for every two electrons transferred, four hydrogen ions are translocated across the cytoplasmic membrane), and thus conserves the redox energy in a proton gradient. The sequence is that of NADH-quinone oxidoreductase subunit K 1 from Citrifermentans bemidjiense (strain ATCC BAA-1014 / DSM 16622 / JCM 12645 / Bem) (Geobacter bemidjiensis).